Here is a 227-residue protein sequence, read N- to C-terminus: UPF0688 protein C1orf174 homolog (227 aa).

Disordered stretches follow at residues 1 to 122 (MRKR…VSDL) and 207 to 227 (AKEEDEDDDDYVDGLANEGNI). Basic and acidic residues predominate over residues 47-63 (TEKESSKKLRKDEKGPV). Composition is skewed to polar residues over residues 77-104 (AASNESSNVNDSQQSEKSITNTKDNGTR) and 113-122 (RLPSSPVSDL).

Belongs to the UPF0688 family.

It is found in the nucleus. The sequence is that of UPF0688 protein C1orf174 homolog from Xenopus tropicalis (Western clawed frog).